We begin with the raw amino-acid sequence, 276 residues long: D-aminoacyl-tRNA deacylase (276 aa).

It belongs to the DtdA deacylase family. Monomer. Requires Zn(2+) as cofactor.

The enzyme catalyses a D-aminoacyl-tRNA + H2O = a tRNA + a D-alpha-amino acid + H(+). It carries out the reaction glycyl-tRNA(Ala) + H2O = tRNA(Ala) + glycine + H(+). D-aminoacyl-tRNA deacylase with broad substrate specificity. By recycling D-aminoacyl-tRNA to D-amino acids and free tRNA molecules, this enzyme counteracts the toxicity associated with the formation of D-aminoacyl-tRNA entities in vivo. The protein is D-aminoacyl-tRNA deacylase of Korarchaeum cryptofilum (strain OPF8).